Reading from the N-terminus, the 295-residue chain is GTPase Era (295 aa).

Residues K7–W176 form the Era-type G domain. The segment at G15–S22 is G1. G15–S22 provides a ligand contact to GTP. Residues Q41–S45 are G2. Residues D62–G65 are G3. Residues D62 to I66 and N124 to D127 contribute to the GTP site. The tract at residues N124 to D127 is G4. Residues I152–A154 form a G5 region. One can recognise a KH type-2 domain in the interval L204–E281.

This sequence belongs to the TRAFAC class TrmE-Era-EngA-EngB-Septin-like GTPase superfamily. Era GTPase family. Monomer.

It localises to the cytoplasm. The protein localises to the cell inner membrane. An essential GTPase that binds both GDP and GTP, with rapid nucleotide exchange. Plays a role in 16S rRNA processing and 30S ribosomal subunit biogenesis and possibly also in cell cycle regulation and energy metabolism. This is GTPase Era from Rickettsia bellii (strain OSU 85-389).